The following is a 303-amino-acid chain: Uridine diphosphate glucose pyrophosphatase NUDT22 (303 aa).

Positions 56, 87, 139, 144, 151, 156, and 158 each coordinate substrate. The Nudix hydrolase domain occupies 118 to 285; sequence ADPLGVGAAL…KGAIILYNRV (168 aa). Residues 148 to 168 form a disordered region; sequence GLVDVPGGHPEPQALCPGGSP. The Nudix box signature appears at 175-196; sequence GQLVVHELFSSVLQEICDEVNL. Mg(2+) contacts are provided by glutamate 189 and glutamate 193. Serine 274 serves as a coordination point for substrate.

Belongs to the Nudix hydrolase family. Mg(2+) serves as cofactor.

The catalysed reaction is UDP-sugar + H2O = UMP + alpha-D-aldose 1-phosphate.. In terms of biological role, hydrolyzes UDP-glucose to glucose 1-phosphate and UMP and UDP-galactose to galactose 1-phosphate and UMP. Preferred substrate is UDP-glucose. The sequence is that of Uridine diphosphate glucose pyrophosphatase NUDT22 (NUDT22) from Homo sapiens (Human).